The primary structure comprises 489 residues: Acetyl-coenzyme A carboxylase carboxyl transferase subunit beta, chloroplastic (489 aa).

Residues 225 to 489 enclose the CoA carboxyltransferase N-terminal domain; sequence LWIQCDNCYG…FFPLNKTEIK (265 aa). Residues cysteine 229, cysteine 232, cysteine 245, and cysteine 248 each coordinate Zn(2+). The C4-type zinc-finger motif lies at 229–248; the sequence is CDNCYGLMYKKVEMNVCEEC.

The protein belongs to the AccD/PCCB family. In terms of assembly, acetyl-CoA carboxylase is a heterohexamer composed of biotin carboxyl carrier protein, biotin carboxylase and 2 subunits each of ACCase subunit alpha and ACCase plastid-coded subunit beta (accD). The cofactor is Zn(2+).

The protein resides in the plastid. It localises to the chloroplast stroma. It carries out the reaction N(6)-carboxybiotinyl-L-lysyl-[protein] + acetyl-CoA = N(6)-biotinyl-L-lysyl-[protein] + malonyl-CoA. Its pathway is lipid metabolism; malonyl-CoA biosynthesis; malonyl-CoA from acetyl-CoA: step 1/1. Its function is as follows. Component of the acetyl coenzyme A carboxylase (ACC) complex. Biotin carboxylase (BC) catalyzes the carboxylation of biotin on its carrier protein (BCCP) and then the CO(2) group is transferred by the transcarboxylase to acetyl-CoA to form malonyl-CoA. The chain is Acetyl-coenzyme A carboxylase carboxyl transferase subunit beta, chloroplastic from Draba nemorosa (Woodland whitlowgrass).